Here is an 877-residue protein sequence, read N- to C-terminus: Oligopeptide transporter 2 (877 aa).

Residues 1–167 (MSETVKDKVI…DPTIPVETFR (167 aa)) lie on the Cytoplasmic side of the membrane. A helical membrane pass occupies residues 168-188 (AYFLAIIWSVIGSGFNEFFSH). A topological domain (extracellular) is located at residue arginine 189. A helical membrane pass occupies residues 190 to 210 (VVSISLNTPIIQMFLYICGKA). Residues 211–240 (WAKTIPCWTITIRGRKYGINIDKPWTQKEQ) lie on the Cytoplasmic side of the membrane. A helical transmembrane segment spans residues 241–261 (MFSTLLYAICQGAFYTHYNIL). The Extracellular segment spans residues 262–272 (TQKLFYHSAFS). The helical transmembrane segment at 273 to 293 (FGYQFLLSLSVQFIGFGFAGI) threads the bilayer. The Cytoplasmic segment spans residues 294-334 (LRKFVVYPARALWPTVMPTIAINKALLGKEKHESGMSRYKF). Residues 335-355 (FFLTFFIMFIYNWFPTYIINI) traverse the membrane as a helical segment. Over 356-374 (LNTFNWMTWIKPSNINLAN) the chain is Extracellular. Asparagine 374 is a glycosylation site (N-linked (GlcNAc...) asparagine). Residues 375–395 (ITGGVTGLGINPISSFDWNVI) traverse the membrane as a helical segment. At 396-404 (SFNSPLVYP) the chain is on the cytoplasmic side. A helical transmembrane segment spans residues 405–425 (FWSYLTQYLGCILAALIVIAV). The Extracellular segment spans residues 426-480 (YYSNYMSCQYLPIFTNSLYTNTGHSFKVTEVLDSDNKLDVKKYQSYSPPYYSAGN). Residues 481–501 (LVSYGAFICAYPLMITWSFIV) form a helical membrane-spanning segment. The Cytoplasmic portion of the chain corresponds to 502–553 (HSKLLFNAFKDWALNLWAMRKLKSWVTMFKSDYRALDDYDDPHSNAMKNYKE). Residues 554-574 (VPDWWYFAILIGSLVVGIAVV) form a helical membrane-spanning segment. Residues 575-582 (EHYPTNTP) lie on the Extracellular side of the membrane. The helical transmembrane segment at 583 to 603 (VWGLFVCLGFNFVFLIPTTIL) threads the bilayer. The Cytoplasmic portion of the chain corresponds to 604-614 (QATTGYSFGLN). A helical transmembrane segment spans residues 615-635 (LLIEMVMGYALPGNPIAIMIL). The Extracellular segment spans residues 636 to 671 (KAFGYNIDGQADNYVSNLKIAHYCKIPPMALFRGQC). Residues 672-692 (VIVFIQIFVNLGVLNWQISNI) traverse the membrane as a helical segment. Residues 693 to 730 (KDFCTPHQNAKFTCPDAVTYYNASVVWGAIGPKRIFNY) lie on the Cytoplasmic side of the membrane. The helical transmembrane segment at 731 to 751 (IYPIFKWCWLIGACIGIFFGV) threads the bilayer. Residues 752–766 (WKRWGKFYPRYFDPM) are Extracellular-facing. A helical membrane pass occupies residues 767–789 (LFVGGMLNMSPPYNLMYYTSGMI). Topologically, residues 790–811 (VSYISQYYMKRHHLNLWEKYNY) are cytoplasmic. A helical transmembrane segment spans residues 812–832 (VLSAGFSTGLVLSAIIIFFAV). Over 833-877 (QYKDTAFNWWGNTVPYAGADGVGYPLKNITDTANGYFGYAPGHYP) the chain is Extracellular. Asparagine 860 is a glycosylation site (N-linked (GlcNAc...) asparagine).

The protein belongs to the oligopeptide OPT transporter family.

It localises to the membrane. Functionally, transports tetra- and pentapeptides. Does not transport glutathione. This Saccharomyces cerevisiae (strain ATCC 204508 / S288c) (Baker's yeast) protein is Oligopeptide transporter 2 (OPT2).